The primary structure comprises 710 residues: Lactotransferrin (710 aa).

The signal sequence occupies residues 1-19; sequence MKLVFLVLLFLGALGLCLA. Phenylalanine 10 carries the phosphoserine; alternate modification. Phenylalanine 10 carries an O-linked (GlcNAc) serine; alternate glycan. Residues 20-24 are critical for glycosaminoglycan, lipid A, lysozyme and DNA binding; it reads GRRRS. 2 bactericidal and antifungal activity regions span residues 20–29 and 39–49; these read GRRRSVQWCA and FQWQRNMRKVR. The tract at residues 21-22 is important for full bactericidal and antifungal activities; sequence RR. 2 Transferrin-like domains span residues 25 to 352 and 364 to 695; these read VQWC…NLRK and VVWC…NLKK. 2 disulfides stabilise this stretch: cysteine 28-cysteine 64 and cysteine 38-cysteine 55. Interaction with PspA regions lie at residues 39-46 and 57-58; these read FQWQRNMR and KR. The interval 39-49 is interaction with lipopolysaccharide; that stretch reads FQWQRNMRKVR. Residues 46 to 51 form an involved in glycosaminoglycan binding region; it reads RKVRGP. Aspartate 79 serves as a coordination point for Fe(3+). Lysine 92 is an active-site residue. Tyrosine 111 contacts Fe(3+). 4 cysteine pairs are disulfide-bonded: cysteine 134-cysteine 217, cysteine 176-cysteine 192, cysteine 189-cysteine 200, and cysteine 250-cysteine 264. 4 residues coordinate hydrogencarbonate: threonine 136, arginine 140, alanine 142, and glycine 143. The N-linked (GlcNAc...) asparagine glycan is linked to asparagine 156. Residue tyrosine 211 participates in Fe(3+) binding. Fe(3+) is bound at residue histidine 272. The active-site Nucleophile is serine 278. 2 cysteine pairs are disulfide-bonded: cysteine 367–cysteine 399 and cysteine 377–cysteine 390. Glycyl lysine isopeptide (Lys-Gly) (interchain with G-Cter in ubiquitin) cross-links involve residues glutamine 379 and serine 391. Positions 414 and 454 each coordinate Fe(3+). Intrachain disulfides connect cysteine 424/cysteine 705, cysteine 446/cysteine 668, cysteine 478/cysteine 553, cysteine 502/cysteine 696, cysteine 512/cysteine 526, cysteine 523/cysteine 536, cysteine 594/cysteine 608, and cysteine 646/cysteine 651. The hydrogencarbonate site is built by threonine 480, arginine 484, alanine 486, and glycine 487. An N-linked (GlcNAc...) asparagine glycan is attached at asparagine 497. Tyrosine 547 serves as a coordination point for Fe(3+). Histidine 616 contributes to the Fe(3+) binding site. An N-linked (GlcNAc...) asparagine glycan is attached at asparagine 642.

This sequence belongs to the transferrin family. Monomer. Found in a complex with LTF, CLU, EPPIN and SEMG1. Found in a complex with MPO and LTF; interacts directly with CP, allows Fe(3+) incorporation into LTF and activation of CP ferroxidase activity. Post-translationally, phosphorylation at Ser-10 activates the transcriptional activity. Phosphorylation at Ser-10 also promotes proteasomal degradation. Alternatively can undergo O-GlcNAcylation at Ser-10. O-GlcNAcylation at Ser-10 inhibits DNA binding and negatively regulates the transcriptional activity. Alternatively can undergo phosphorylation at Ser-10. In terms of processing, poly-N-acetyllactosaminic carbohydrate moiety seems to be needed for TLR4 activation. In terms of tissue distribution, high levels are found in saliva and tears, intermediate levels in serum and plasma, and low levels in urine. In kidney, detected in the distal collecting tubules in the medulla but not in the cortical region or in blood vessels. Detected in peripheral blood neutrophils (at protein level). Isoform 1 and isoform DeltaLf are expressed in breast, prostate, spleen, pancreas, kidney, small intestine, lung, skeletal muscle, uterus, thymus and fetal liver. Isoform 1 is expressed in brain, testis and peripheral blood leukocytes; isoform DeltaLf is barely detectable in these tissues. Isoform DeltaLf is expressed in placenta, liver and ovary; isoform 1 is barely detectable in these tissues. In kidney, isoform 1 is expressed at high levels in the collecting tubules of the medulla but at very low levels in the cortex.

The protein localises to the secreted. The protein resides in the cytoplasmic granule. Its subcellular location is the cytoplasm. It localises to the nucleus. Its function is as follows. Transferrins are iron binding transport proteins which can bind two Fe(3+) ions in association with the binding of an anion, usually bicarbonate. In terms of biological role, major iron-binding and multifunctional protein found in exocrine fluids such as breast milk and mucosal secretions. Has antimicrobial activity, which depends on the extracellular cation concentration. Antimicrobial properties include bacteriostasis, which is related to its ability to sequester free iron and thus inhibit microbial growth, as well as direct bactericidal properties leading to the release of lipopolysaccharides from the bacterial outer membrane. Can also prevent bacterial biofilm development in P.aeruginosa infection. Has weak antifungal activity against C.albicans. Has anabolic, differentiating and anti-apoptotic effects on osteoblasts and can also inhibit osteoclastogenesis, possibly playing a role in the regulation of bone growth. Promotes binding of species C adenoviruses to epithelial cells, promoting adenovirus infection. Can inhibit papillomavirus infections. Stimulates the TLR4 signaling pathway leading to NF-kappa-B activation and subsequent pro-inflammatory cytokine production while also interfering with the lipopolysaccharide (LPS)-stimulated TLR4 signaling. Inhibits neutrophil granulocyte migration to sites of apoptosis, when secreted by apoptotic cells. Stimulates VEGFA-mediated endothelial cell migration and proliferation. Binds heparin, chondroitin sulfate and possibly other glycosaminoglycans (GAGs). Also binds specifically to pneumococcal surface protein A (PspA), the lipid A portion of bacterial lipopolysaccharide (LPS), lysozyme and DNA. Lactoferricin binds to the bacterial surface and is crucial for the bactericidal functions. Has some antiviral activity against papillomavirus infection. N-terminal region shows strong antifungal activity against C.albicans. Contains two BBXB heparin-binding consensus sequences that appear to form the predominate functional GAG-binding site. Functionally, has antimicrobial activity and is able to permeabilize different ions through liposomal membranes. Its function is as follows. Has opioid antagonist activity. Shows preference for mu-receptor. In terms of biological role, has opioid antagonist activity. Shows higher degrees of preference for kappa-receptors than for mu-receptors. The lactotransferrin transferrin-like domain 1 functions as a serine protease of the peptidase S60 family that cuts arginine rich regions. This function contributes to the antimicrobial activity. Shows a preferential cleavage at -Arg-Ser-Arg-Arg-|- and -Arg-Arg-Ser-Arg-|-, and of Z-Phe-Arg-|-aminomethylcoumarin sites. Functionally, transcription factor with antiproliferative properties and ability to induce cell cycle arrest. Binds to the DeltaLf response element found in the SKP1, BAX, DCPS, and SELENOH promoters. In Homo sapiens (Human), this protein is Lactotransferrin.